The chain runs to 1089 residues: Probable transport protein MmpL8 (1089 aa).

A disordered region spans residues 1–26 (MCDVLMQPVRTPRPSTNLRSKPLRPT). A run of 12 helical transmembrane segments spans residues 44–64 (WVVI…VPSL), 222–242 (ITIL…TMVL), 257–277 (LVAI…IFMS), 316–336 (IGKV…GMVF), 349–369 (LGIS…ALMV), 400–420 (KTHL…AGLA), 555–575 (AIST…LLGG), 874–894 (IIAM…RAIV), 898–918 (YLIG…VIVF), 930–950 (IPGL…MLLI), 973–993 (GGVI…LVFA), and 996–1016 (GSVV…TFLV). Positions 1056–1078 (RTKRKPLLPKEEEEQSPPDDDDL) are disordered. Residues 1066–1078 (EEEEQSPPDDDDL) are compositionally biased toward acidic residues.

Belongs to the resistance-nodulation-cell division (RND) (TC 2.A.6) family. MmpL subfamily.

The protein localises to the cell membrane. The polypeptide is Probable transport protein MmpL8 (mmpL8) (Mycobacterium tuberculosis (strain ATCC 25177 / H37Ra)).